Consider the following 410-residue polypeptide: Putative transporter AmpG 1 (410 aa).

12 helical membrane passes run 5–25 (LSII…TGNT), 40–60 (IGLL…APIF), 76–96 (LSWI…LSFL), 98–118 (PFDN…FSSM), 141–161 (GIYI…AIYL), 169–189 (EIYK…IVGV), 217–237 (ILKP…LILY), 265–285 (VGKF…GFIM), 290–310 (ILDS…LFII), 320–340 (LLFI…TAYI), 356–378 (YSFF…GYIV), and 383–402 (WQNF…LVLL).

Belongs to the major facilitator superfamily.

Its subcellular location is the cell inner membrane. This Rickettsia bellii (strain RML369-C) protein is Putative transporter AmpG 1 (ampG1).